A 338-amino-acid chain; its full sequence is Methionine import ATP-binding protein MetN 2 (338 aa).

The ABC transporter domain maps to 2 to 242; the sequence is IEIEKVCVDF…PQHAFTQQLV (241 aa). 39–46 is a binding site for ATP; that stretch reads GTSGAGKS.

The protein belongs to the ABC transporter superfamily. Methionine importer (TC 3.A.1.24) family. As to quaternary structure, the complex is composed of two ATP-binding proteins (MetN), two transmembrane proteins (MetI) and a solute-binding protein (MetQ).

Its subcellular location is the cell inner membrane. It carries out the reaction L-methionine(out) + ATP + H2O = L-methionine(in) + ADP + phosphate + H(+). It catalyses the reaction D-methionine(out) + ATP + H2O = D-methionine(in) + ADP + phosphate + H(+). Its function is as follows. Part of the ABC transporter complex MetNIQ involved in methionine import. Responsible for energy coupling to the transport system. This chain is Methionine import ATP-binding protein MetN 2, found in Salmonella choleraesuis (strain SC-B67).